The primary structure comprises 349 residues: 4-hydroxythreonine-4-phosphate dehydrogenase (349 aa).

Substrate-binding residues include His141 and Thr142. A divalent metal cation is bound by residues His176, His221, and His276. The substrate site is built by Lys284, Asn293, and Arg302.

It belongs to the PdxA family. In terms of assembly, homodimer. Requires Zn(2+) as cofactor. Mg(2+) is required as a cofactor. The cofactor is Co(2+).

The protein resides in the cytoplasm. It catalyses the reaction 4-(phosphooxy)-L-threonine + NAD(+) = 3-amino-2-oxopropyl phosphate + CO2 + NADH. It participates in cofactor biosynthesis; pyridoxine 5'-phosphate biosynthesis; pyridoxine 5'-phosphate from D-erythrose 4-phosphate: step 4/5. In terms of biological role, catalyzes the NAD(P)-dependent oxidation of 4-(phosphooxy)-L-threonine (HTP) into 2-amino-3-oxo-4-(phosphooxy)butyric acid which spontaneously decarboxylates to form 3-amino-2-oxopropyl phosphate (AHAP). This Methylorubrum extorquens (strain PA1) (Methylobacterium extorquens) protein is 4-hydroxythreonine-4-phosphate dehydrogenase.